A 1962-amino-acid chain; its full sequence is MQRKKKGLSILLAGTVALGALAVLPVGEIQAKAAISQQTKGSSLANTVTAATAKQAATDTTAATTNQAIATQLAAKGIDYNKLNKVQQQDIYVDVIVQMSAAPASENGTLRTDYSSTAEIQQETNKVIAAQASVKAAVEQVTQQTAGESYGYVVNGFSTKVRVVDIPKLKQIAGVKTVTLAKVYYPTDAKANSMANVQAVWSNYKYKGEGTVVSVIDSGIDPTHKDMRLSDDKDVKLTKSDVEKFTDTAKHGRYFNSKVPYGFNYADNNDTITDDTVDEQHGMHVAGIIGANGTGDDPAKSVVGVAPEAQLLAMKVFTNSDTSATTGSATLVSAIEDSAKIGADVLNMSLGSDSGNQTLEDPELAAVQNANESGTAAVISAGNSGTSGSATEGVNKDYYGLQDNEMVGSPGTSRGATTVASAENTDVITQAVTITDGTGLQLGPETIQLSSHDFTGSFDQKKFYIVKDASGNLSKGALADYTADAKGKIAIVKRGEFSFDDKQKYAQAAGAAGLIIVNTDGTATPMTSIALTTTFPTFGLSSVTGQKLVDWVTAHPDDSLGVKITLAMLPNQKYTEDKMSDFTSYGPVSNLSFKPDITAPGGNIWSTQNNNGYTNMSGTSMASPFIAGSQALLKQALNNKNNPFYAYYKQLKGTALTDFLKTVEMNTAQPINDINYNNVIVSPRRQGAGLVDVKAAIDALEKNPSTVVAENGYPAVELKDFTSTDKTFKLTFTNRTTHELTYQMDSNTDTNAVYTSATDPNSGVLYDKKIDGAAIKAGSNITVPAGKTAQIEFTLSLPKSFDQQQFVEGFLNFKGSDGSRLNLPYMGFFGDWNDGKIVDSLNGITYSPAGGNFGTVPLLKNKNTGTQYYGGMVTDADGNKTVDDQAIAFSSDKNALYNEISMKYYLLRNISNVQVDILDGQGNKVTTLSSSTNRKKTYYNAHSQQYIYYNAPAWDGTYYDQRDGNIKTADDGSYTYRISGVPEGGDKRQVFDVPFKLDSKAPTVRHVALSAKTENGKTQYYLTAEAKDDLSGLDATKSVKTEINEVTNLDATFTDAGTTADGYTKIETPLSDEQAQALGNGDNSAELYLTDNASNATDQDASVQKPGSTSFDLIVNGGGIPDKISSTTTGYEANTQGGGTYTFSGTYPAAVDGTYTDAQGKKHDLNTTYDAATNSFTASMPVTNADYAAQVDLYADKAHTQLLKHFDTKVRLTAPTFTDLKFNNGSDQTSEATIKVTGTVSADTKTVNVGDTVAALDAQHHFSVDVPVNYGDNTIKVTATDEDGNTTTEQKTITSSYDPDMLKNSVTFDQGVTFGANEFNATSAKFYDPKTGIATITGKVKHPTTTLQVDGKQIPIKDDLTFSFTLDLGTLGQKPFGVVVGDTTQNKTFQEALTFILDAVAPTLSLDSSTDAPVYTNDPNFQITGTATDNAQYLSLSINGSSVASQYVDININSGKPGHMAIDQPVKLLEGKNVLTVAVTDSEDNTTTKNITVYYEPKKTLAAPTVTPSTTEPAKTVTLTANSAATGETVQYSADGGKTYQDVPAAGVTVTANGTFKFKSTDLYGNESPAVDYVVTNIKADDPAQLQAAKQELTNLIASAKTLSASGKYDDATTTALAAATQKAQTALDQTNASVDSLTGANRDLQTAINQLAAKLPADKKTSLLNQLQSVKAALGTDLGNQTDSSTGKTFTAALDDLVAQAQAGTQTDDQLQATLAKVLDAVLAKLAEGIKAATPAEVGNAKDAATGKTWYADIADTLTSGQASADASDKLAHLQALQSLKTKVAAAVEAAKTVGKGDGTTGTSDKGGGQGTPAPAPGDTGKDKGDEGSQPSSGGNIPTKPATTTSTTTDDTTDRNGQLTSGTSDKGGGQGTPAPAPGDIGKDKGDEGSQPSSGGNIPTNPATTTSTTTDDTTDRNGQLTSGKGALPKTGETTERPAFGFLGVIVVSLMGVLGLKRKQREE.

An N-terminal signal peptide occupies residues 1–33 (MQRKKKGLSILLAGTVALGALAVLPVGEIQAKA). The propeptide occupies 34-187 (AISQQTKGSS…VTLAKVYYPT (154 aa)). The 507-residue stretch at 191 to 697 (ANSMANVQAV…AGLVDVKAAI (507 aa)) folds into the Peptidase S8 domain. Catalysis depends on charge relay system residues aspartate 217, histidine 281, and serine 620. Residues 1796 to 1938 (GKGDGTTGTS…KTGETTERPA (143 aa)) are disordered. The span at 1797-1812 (KGDGTTGTSDKGGGQG) shows a compositional bias: gly residues. Composition is skewed to polar residues over residues 1856 to 1865 (RNGQLTSGTS) and 1890 to 1903 (SQPSSGGNIPTNPA). Residues 1927-1931 (LPKTG) carry the LPXTG sorting signal motif. Pentaglycyl murein peptidoglycan amidated threonine is present on threonine 1930. Positions 1931–1962 (GETTERPAFGFLGVIVVSLMGVLGLKRKQREE) are cleaved as a propeptide — removed by sortase.

It belongs to the peptidase S8 family.

Its subcellular location is the secreted. The protein resides in the cell wall. The enzyme catalyses Endopeptidase activity with very broad specificity, although some subsite preference have been noted, e.g. large hydrophobic residues in the P1 and P4 positions, and Pro in the P2 position. Best known for its action on caseins, although it has been shown to hydrolyze hemoglobin and oxidized insulin B-chain.. Protease which breaks down milk proteins during the growth of the bacteria on milk. This is PIII-type proteinase (prtP) from Lactococcus lactis subsp. cremoris (strain SK11).